Reading from the N-terminus, the 462-residue chain is uncharacterized protein (462 aa).

Transmembrane regions (helical) follow at residues 12–32 (WWWL…APTV) and 257–277 (GLCV…LELV).

This sequence belongs to the HHV-5 US29 protein family.

The protein localises to the host membrane. This is an uncharacterized protein from Human cytomegalovirus (strain AD169) (HHV-5).